Reading from the N-terminus, the 249-residue chain is Probable phosphatase Shal_1519 (249 aa).

The Zn(2+) site is built by histidine 8, histidine 10, histidine 16, histidine 41, glutamate 74, histidine 102, histidine 132, aspartate 193, and histidine 195.

This sequence belongs to the PHP family. Zn(2+) serves as cofactor.

The protein is Probable phosphatase Shal_1519 of Shewanella halifaxensis (strain HAW-EB4).